A 471-amino-acid chain; its full sequence is MIKNLSTFFVGIALSCLAGCTPIPKETTATKEYAPLEVPVPERPAGQQDVIELTTPKLDTVRVGFIGLGMRGPSAVERWTHIPGTKIVALCDLLPENAEKAQKIVTNAGMEAPALYSGSEDAWKQLCERNDIDLVYIATDWKHHTEMGIYAMEHGKHAAIEVPAAMSLDEIWALINTSEKTRKHCMQLENCVYDFFELTTLNMAQKGLFGEVLHVEGSYIHNLEEFWPYYWNNWRLDYNREFRGDVYATHGLGPACQLLNIHRGDRMKTLVAMDTKAVTGPELVKQYQKEEAPDFQNGDHTMTFIRTENGKTIHIQHDVMNPRPYSRMYQLTGTKGFANKYPIEQYCFRPDQIDSTSIPDHENLSMHSAVPEKVKEALMSQYKHPIHQELEETAKKIGGHGGMDFIMDYRLVYCLRNGLPLDMDVYDLAEWCCMADLTRLSIENGNAPVAVPDFTRGNWNKVDGYHHAFAQ.

The first 15 residues, M1–S15, serve as a signal peptide directing secretion. C16 carries the N-palmitoyl cysteine lipid modification. C16 is lipidated: S-diacylglycerol cysteine. Residues M70–R71, D92, W141–H144, E161–V162, and N190 contribute to the NAD(+) site. Residues Y219, R235, Y247 to H250, and Y325 contribute to the substrate site. Y247 is a binding site for NAD(+).

The protein belongs to the Gfo/Idh/MocA family. Glycosyl hydrolase 109 subfamily. NAD(+) is required as a cofactor.

Its subcellular location is the cell membrane. Functionally, glycosidase. This is Glycosyl hydrolase family 109 protein 1 from Phocaeicola vulgatus (strain ATCC 8482 / DSM 1447 / JCM 5826 / CCUG 4940 / NBRC 14291 / NCTC 11154) (Bacteroides vulgatus).